The sequence spans 401 residues: MTLPKIKHVRAWFTGGATAEQGAGGGDYHDQGANHWIDDHIATPMSKYKEYEQSRQSFGINVLGTLIVEVEADNGQTGFAVSTAGEMGCFIVEKHLNRFIEGKCVSDIKLIHDQMLNATLYYAGSGGLVMNTLSCVDLALWDLFGKVVGLPVYKLLGGAVRDEIQFYATGARPDLAQEMGFIGGKMPTHWGPHDGDAGIRKDVAMVADMREKCGPDFWLMLDCWMSQDVNYATKLAHACAPYNLKWIEECLPPQQYEGYRELKRQAPAGMMVTSGEHHGTLQSFRTLSETGIDIMQPDVGWCGGLTTLVEIAAIAKARGQLVVPHGSSVYSHHAVITFTNTPFSEFLMTSPDCATLRPQFDPILLGEPVPERGRIHKSVLDKPGFGVELNRDCNLKRPYQH.

H29 and R55 together coordinate substrate. 3 residues coordinate Mg(2+): D222, E248, and E276. Residue H325 is the Proton acceptor of the active site. E345 contributes to the substrate binding site.

Belongs to the mandelate racemase/muconate lactonizing enzyme family. RhamD subfamily. Homooctamer; tetramer of dimers. Mg(2+) serves as cofactor.

It catalyses the reaction L-rhamnonate = 2-dehydro-3-deoxy-L-rhamnonate + H2O. In terms of biological role, catalyzes the dehydration of L-rhamnonate to 2-keto-3-deoxy-L-rhamnonate (KDR). The polypeptide is L-rhamnonate dehydratase (Klebsiella pneumoniae (strain 342)).